A 360-amino-acid chain; its full sequence is Photosystem II protein D1 3 (360 aa).

A run of 3 helical transmembrane segments spans residues 29–46, 118–133, and 142–156; these read YVGW…AATI, HFLI…EWEL, and WICV…AATA. Histidine 118 is a binding site for chlorophyll a. Tyrosine 126 contributes to the pheophytin a binding site. 2 residues coordinate [CaMn4O5] cluster: aspartate 170 and glutamate 189. The helical transmembrane segment at 197–218 threads the bilayer; sequence FHQLGVAGVFGGALFSAMHGSL. Residue histidine 198 coordinates chlorophyll a. A quinone contacts are provided by residues histidine 215 and 264 to 265; that span reads SF. Histidine 215 provides a ligand contact to Fe cation. Fe cation is bound at residue histidine 272. A helical membrane pass occupies residues 274–288; sequence FLAAWPVIGIWFTAL. 4 residues coordinate [CaMn4O5] cluster: histidine 332, glutamate 333, aspartate 342, and alanine 344. The propeptide occupies 345 to 360; that stretch reads SAESAPVAMIAPSING.

Belongs to the reaction center PufL/M/PsbA/D family. As to quaternary structure, PSII is composed of 1 copy each of membrane proteins PsbA, PsbB, PsbC, PsbD, PsbE, PsbF, PsbH, PsbI, PsbJ, PsbK, PsbL, PsbM, PsbT, PsbX, PsbY, PsbZ, Psb30/Ycf12, peripheral proteins PsbO, CyanoQ (PsbQ), PsbU, PsbV and a large number of cofactors. It forms dimeric complexes. Precursor protein interacts with Ycf48. Requires The D1/D2 heterodimer binds P680, chlorophylls that are the primary electron donor of PSII, and subsequent electron acceptors. It shares a non-heme iron and each subunit binds pheophytin, quinone, additional chlorophylls, carotenoids and lipids. D1 provides most of the ligands for the Mn4-Ca-O5 cluster of the oxygen-evolving complex (OEC). There is also a Cl(-1) ion associated with D1 and D2, which is required for oxygen evolution. The PSII complex binds additional chlorophylls, carotenoids and specific lipids. as cofactor. Post-translationally, C-terminally processed by CtpA; processing is essential to allow assembly of the oxygen-evolving complex and thus photosynthetic growth. Tyr-161 forms a radical intermediate that is referred to as redox-active TyrZ, YZ or Y-Z.

The protein localises to the cellular thylakoid membrane. It catalyses the reaction 2 a plastoquinone + 4 hnu + 2 H2O = 2 a plastoquinol + O2. Its function is as follows. Photosystem II (PSII) is a light-driven water:plastoquinone oxidoreductase that uses light energy to abstract electrons from H(2)O, generating O(2) and a proton gradient subsequently used for ATP formation. It consists of a core antenna complex that captures photons, and an electron transfer chain that converts photonic excitation into a charge separation. The D1/D2 (PsbA/PsbD) reaction center heterodimer binds P680, the primary electron donor of PSII as well as several subsequent electron acceptors. This is Photosystem II protein D1 3 from Thermosynechococcus vestitus (strain NIES-2133 / IAM M-273 / BP-1).